Reading from the N-terminus, the 123-residue chain is D-ribose pyranase (123 aa).

The active-site Proton donor is His20. Residues Asp28, His90, and 112–114 each bind substrate; that span reads YAN.

It belongs to the RbsD / FucU family. RbsD subfamily. In terms of assembly, homodecamer.

It is found in the cytoplasm. The catalysed reaction is beta-D-ribopyranose = beta-D-ribofuranose. The protein operates within carbohydrate metabolism; D-ribose degradation; D-ribose 5-phosphate from beta-D-ribopyranose: step 1/2. Functionally, catalyzes the interconversion of beta-pyran and beta-furan forms of D-ribose. The protein is D-ribose pyranase of Corynebacterium glutamicum (strain R).